The following is a 151-amino-acid chain: Transcriptional regulator MraZ (151 aa).

SpoVT-AbrB domains follow at residues 5–52 (ANAI…PLSE) and 81–124 (AVDL…DEDA).

This sequence belongs to the MraZ family. As to quaternary structure, forms oligomers.

Its subcellular location is the cytoplasm. It localises to the nucleoid. The sequence is that of Transcriptional regulator MraZ from Pseudomonas syringae pv. tomato (strain ATCC BAA-871 / DC3000).